The following is a 507-amino-acid chain: Putative F-box/LRR-repeat protein At4g00320 (507 aa).

Positions 12–60 (RDGISGLPDAMICHILSFLPTKVAASTTVLAKRWKPLLAFMPNLDFDES) constitute an F-box domain. 5 LRR repeats span residues 135–163 (RGFG…KIQF), 187–212 (YVKM…LLMN), 214–240 (IWKE…KFSR), 317–348 (ILYL…TIRT), and 349–374 (GVHI…VFEG).

The chain is Putative F-box/LRR-repeat protein At4g00320 from Arabidopsis thaliana (Mouse-ear cress).